The following is a 480-amino-acid chain: Pyruvate kinase II (480 aa).

A substrate-binding site is contributed by Arg36. Asn38, Ser40, and Asp70 together coordinate K(+). An ATP-binding site is contributed by 38–41 (NFSH). Arg77 and Lys160 together coordinate ATP. Lys223 serves as a coordination point for substrate. Position 225 (Glu225) interacts with Mg(2+). Residues Gly251, Asp252, and Thr284 each contribute to the substrate site. Asp252 contacts Mg(2+).

It belongs to the pyruvate kinase family. Homotetramer. It depends on Mg(2+) as a cofactor. K(+) is required as a cofactor.

The enzyme catalyses pyruvate + ATP = phosphoenolpyruvate + ADP + H(+). Its pathway is carbohydrate degradation; glycolysis; pyruvate from D-glyceraldehyde 3-phosphate: step 5/5. With respect to regulation, allosterically activated by AMP and by several sugar phosphates. Belongs to type II PK. Functionally, catalyzes the formation of pyruvate in the last step of glycolysis, it is irreversible under physiological conditions. The reaction is critical for the control of metabolic flux in the second part of glycolysis. This Salmonella typhimurium (strain LT2 / SGSC1412 / ATCC 700720) protein is Pyruvate kinase II (pykA).